The sequence spans 172 residues: Peptide methionine sulfoxide reductase MsrA 2 (172 aa).

The active site involves Cys12.

Belongs to the MsrA Met sulfoxide reductase family.

It catalyses the reaction L-methionyl-[protein] + [thioredoxin]-disulfide + H2O = L-methionyl-(S)-S-oxide-[protein] + [thioredoxin]-dithiol. The catalysed reaction is [thioredoxin]-disulfide + L-methionine + H2O = L-methionine (S)-S-oxide + [thioredoxin]-dithiol. In terms of biological role, has an important function as a repair enzyme for proteins that have been inactivated by oxidation. Catalyzes the reversible oxidation-reduction of methionine sulfoxide in proteins to methionine. The sequence is that of Peptide methionine sulfoxide reductase MsrA 2 (msrA2) from Lactococcus lactis subsp. lactis (strain IL1403) (Streptococcus lactis).